A 94-amino-acid chain; its full sequence is Large ribosomal subunit protein bL25 (94 aa).

The protein belongs to the bacterial ribosomal protein bL25 family. In terms of assembly, part of the 50S ribosomal subunit; part of the 5S rRNA/L5/L18/L25 subcomplex. Contacts the 5S rRNA. Binds to the 5S rRNA independently of L5 and L18.

Functionally, this is one of the proteins that binds to the 5S RNA in the ribosome where it forms part of the central protuberance. This is Large ribosomal subunit protein bL25 from Cronobacter sakazakii (strain ATCC BAA-894) (Enterobacter sakazakii).